The following is a 131-amino-acid chain: Small ribosomal subunit protein uS9 (131 aa).

Belongs to the universal ribosomal protein uS9 family.

This chain is Small ribosomal subunit protein uS9, found in Mannheimia succiniciproducens (strain KCTC 0769BP / MBEL55E).